Consider the following 485-residue polypeptide: Metalloprotease AprA (485 aa).

H187 provides a ligand contact to Zn(2+). Residue E188 is part of the active site. Zn(2+) is bound by residues H191 and H197. Positions 268, 270, 272, 300, 302, 303, 305, 342, 344, 349, 351, 353, 358, 360, 362, 366, 367, 368, 369, 371, 375, 376, 377, 378, 380, 384, 385, 386, 387, 389, 398, 405, 415, 461, 463, 465, 467, and 469 each coordinate Ca(2+). Hemolysin-type calcium-binding repeat units follow at residues F347 to L364, K365 to L382, and W383 to A395.

This sequence belongs to the peptidase M10B family. Ca(2+) serves as cofactor. It depends on Zn(2+) as a cofactor.

It localises to the secreted. Functionally, secreted protease which is important for P.entomophila to counteract the local immune response of Drosophila. Can degrade antimicrobial peptides (AMPs), e.g. Diptericin and Cecropin A. Thus, protects P.entomophila from the Drosophila antimicrobial peptides produced by the gut innate immune response, and promotes bacterial persistence in the Drosophila gut and killing of the host. Is responsible for maturation of pro-Monalysin to the active toxin Monalysin, by cleaving its N-terminus. This is Metalloprotease AprA from Pseudomonas entomophila (strain L48).